Reading from the N-terminus, the 20-residue chain is AKLDFDRSKEHVNVGTIGVH.

The protein belongs to the GTP-binding elongation factor family. EF-Tu/EF-1A subfamily. Monomer.

The protein localises to the cytoplasm. Functionally, this protein promotes the GTP-dependent binding of aminoacyl-tRNA to the A-site of ribosomes during protein biosynthesis. The sequence is that of Elongation factor Tu (tuf) from Mycoplasmopsis synoviae (Mycoplasma synoviae).